A 223-amino-acid polypeptide reads, in one-letter code: Urease accessory protein UreF (223 aa).

It belongs to the UreF family. In terms of assembly, ureD, UreF and UreG form a complex that acts as a GTP-hydrolysis-dependent molecular chaperone, activating the urease apoprotein by helping to assemble the nickel containing metallocenter of UreC. The UreE protein probably delivers the nickel.

The protein resides in the cytoplasm. Functionally, required for maturation of urease via the functional incorporation of the urease nickel metallocenter. This chain is Urease accessory protein UreF, found in Agrobacterium fabrum (strain C58 / ATCC 33970) (Agrobacterium tumefaciens (strain C58)).